The following is an 85-amino-acid chain: Exodeoxyribonuclease 7 small subunit (85 aa).

A disordered region spans residues 66–85 (SGEGEEVPLDTPDAEDGDGE). A compositionally biased stretch (acidic residues) spans 68–85 (EGEEVPLDTPDAEDGDGE).

Belongs to the XseB family. In terms of assembly, heterooligomer composed of large and small subunits.

The protein resides in the cytoplasm. The catalysed reaction is Exonucleolytic cleavage in either 5'- to 3'- or 3'- to 5'-direction to yield nucleoside 5'-phosphates.. In terms of biological role, bidirectionally degrades single-stranded DNA into large acid-insoluble oligonucleotides, which are then degraded further into small acid-soluble oligonucleotides. The protein is Exodeoxyribonuclease 7 small subunit of Thioalkalivibrio sulfidiphilus (strain HL-EbGR7).